Consider the following 160-residue polypeptide: Seed allergenic protein RA5 (160 aa).

The signal sequence occupies residues 1-26; sequence MASNKVVFSVLLLAVVSVLAATATMA. 5 disulfide bridges follow: Cys-42-Cys-92, Cys-56-Cys-80, Cys-64-Cys-124, Cys-81-Cys-140, and Cys-94-Cys-152.

The protein belongs to the protease inhibitor I6 (cereal trypsin/alpha-amylase inhibitor) family. Five disulfide bonds are present.

The protein localises to the secreted. In terms of biological role, seed storage protein. This Oryza sativa subsp. japonica (Rice) protein is Seed allergenic protein RA5 (RA5).